Here is a 466-residue protein sequence, read N- to C-terminus: Ribulose bisphosphate carboxylase large chain (466 aa).

K5 is modified (N6,N6,N6-trimethyllysine). 2 residues coordinate substrate: N114 and T164. K166 serves as the catalytic Proton acceptor. K168 lines the substrate pocket. Positions 192, 194, and 195 each coordinate Mg(2+). K192 carries the N6-carboxylysine modification. Catalysis depends on H285, which acts as the Proton acceptor. R286, H318, and S370 together coordinate substrate.

This sequence belongs to the RuBisCO large chain family. Type I subfamily. As to quaternary structure, heterohexadecamer of 8 large chains and 8 small chains; disulfide-linked. The disulfide link is formed within the large subunit homodimers. Requires Mg(2+) as cofactor. In terms of processing, the disulfide bond which can form in the large chain dimeric partners within the hexadecamer appears to be associated with oxidative stress and protein turnover.

Its subcellular location is the plastid. It is found in the chloroplast. The catalysed reaction is 2 (2R)-3-phosphoglycerate + 2 H(+) = D-ribulose 1,5-bisphosphate + CO2 + H2O. It catalyses the reaction D-ribulose 1,5-bisphosphate + O2 = 2-phosphoglycolate + (2R)-3-phosphoglycerate + 2 H(+). Its function is as follows. RuBisCO catalyzes two reactions: the carboxylation of D-ribulose 1,5-bisphosphate, the primary event in carbon dioxide fixation, as well as the oxidative fragmentation of the pentose substrate in the photorespiration process. Both reactions occur simultaneously and in competition at the same active site. In Drosera binata (Fork-leaved sundew), this protein is Ribulose bisphosphate carboxylase large chain.